A 704-amino-acid polypeptide reads, in one-letter code: MLRGRSLSVTSLGGLPVWEAERLPVEDLLLFEVSWEVTNKVGGICTVIQTKAKTTADEWGENYFLIGPYFEHNMKTQVEQCEPTNDAVRKAVDAMNKHGCQVHFGRWLIEGSPYVVLFDISSSAWNLDRWKGDFWEACGVGIPHHDREANDMLIFGSLTAWFLKEVTDHADGKHVIAQFHEWQAGTGLILSRARKLPIATVFTTHATLLGRYLCAANIDFYNQLDKFDIDKEAGERQIYHRYCMERASVHCAHVFTTVSEITAIEAEHMLKRKPDVVTPNGLNVKKFSAVHEFQNLHAMYKARIQDFVRGHFYGHLDFDLEKTLFLFIAGRYEFSNKGADIFLESLSRLNFLLRMHKSNVTVVVFFIMPAKTNNFNVETLKGQAVRKQLWDTVHCLKEKFGKKLYDGLLRGEIPDMNSILDRDDLTIMKRAIFSTQRQSLPPVTTHNMIDDSTDPILSTIRRIGLFNNRADRVKVILHPEFLSSTSPLLPMDYEEFVRGCHLGVFPSYYEPWGYTPAECTVMGIPSVTTNLSGFGCFVQEHVADPTAYGIYIVDRRFRSPDDSCNQLTQFLYGFCKQSRRQRIIQRNRTERLSDLLDWRYLGRYYQHARHLTLSRAFPDKFHLEPTSPPTTDGFKYPRPSSVPPSPSGSQASSPQCSDAEDEEDEDERYDEEEEAERDRLNIKSPFSLNHFPKGKKKLHGEYKN.

Position 8 is a phosphoserine; by AMPK and PKA (Ser8). At Ser11 the chain carries Phosphoserine. Position 40 (Lys40) interacts with UDP. UDP-alpha-D-glucose is bound by residues His205 and Arg211. Alpha-D-glucose 6-phosphate is bound by residues His291, Glu292, Gln294, His297, and Lys301. UDP is bound at residue Arg331. Arg331 provides a ligand contact to UDP-alpha-D-glucose. Alpha-D-glucose 6-phosphate is bound at residue His501. UDP-alpha-D-glucose is bound by residues Glu510, Trp512, and Gly513. Thr515 provides a ligand contact to UDP. Alpha-D-glucose 6-phosphate-binding residues include Arg582 and Arg586. Residues 620 to 704 are disordered; it reads KFHLEPTSPP…KKKLHGEYKN (85 aa). Ser627 carries the post-translational modification Phosphoserine. Residues Ser641, Ser645, Ser649, and Ser653 each carry the phosphoserine; by GSK3-alpha and GSK3-beta modification. The segment covering 647-657 has biased composition (low complexity); that stretch reads SGSQASSPQCS. The residue at position 657 (Ser657) is a Phosphoserine; by CK2. Positions 658-675 are enriched in acidic residues; sequence DAEDEEDEDERYDEEEEA. The residue at position 684 (Ser684) is a Phosphoserine.

It belongs to the glycosyltransferase 3 family. As to quaternary structure, part of the glycogen synthase (GS)-glycogenin complex, a heterooctamer composed of a tetramer of GS and 2 dimers of glycogenin, where each GS protomer binds to one glycogenin subunit (via glycogenin C-terminus); the GS tetramer may dissociate from glycogenin dimers to continue glycogen polymerization on its own. May also form a heterooctamer complex with GYG1 (via GYG1 C-terminus). In terms of processing, phosphorylation reduces the activity towards UDP-alpha-D-glucose. Primed phosphorylation at Ser-657 (site 5) by CSNK2A1 and CSNK2A2 is required for inhibitory phosphorylation at Ser-641 (site 3a), Ser-645 (site 3b), Ser-649 (site 3c) and Ser-653 (site 4) by GSK3A an GSK3B. Dephosphorylation at Ser-641 and Ser-645 by PP1 activates the enzyme. Phosphorylation at Ser-8 is not required for interaction with GYG1. Interaction with GYG1 does not regulate the phosphorylation at Ser-8 and Ser-641. As to expression, specifically expressed in liver.

It catalyses the reaction [(1-&gt;4)-alpha-D-glucosyl](n) + UDP-alpha-D-glucose = [(1-&gt;4)-alpha-D-glucosyl](n+1) + UDP + H(+). It functions in the pathway glycan biosynthesis; glycogen biosynthesis. Allosteric activation by glucose-6-phosphate. Phosphorylation reduces the activity towards UDP-glucose. When in the non-phosphorylated state, glycogen synthase does not require glucose-6-phosphate as an allosteric activator; when phosphorylated it does. Its function is as follows. Glycogen synthase participates in the glycogen biosynthetic process along with glycogenin and glycogen branching enzyme. Extends the primer composed of a few glucose units formed by glycogenin by adding new glucose units to it. In this context, glycogen synthase transfers the glycosyl residue from UDP-Glc to the non-reducing end of alpha-1,4-glucan. The polypeptide is Glycogen [starch] synthase, liver (Mus musculus (Mouse)).